Reading from the N-terminus, the 177-residue chain is ATP synthase subunit delta (177 aa).

This sequence belongs to the ATPase delta chain family. As to quaternary structure, F-type ATPases have 2 components, F(1) - the catalytic core - and F(0) - the membrane proton channel. F(1) has five subunits: alpha(3), beta(3), gamma(1), delta(1), epsilon(1). F(0) has three main subunits: a(1), b(2) and c(10-14). The alpha and beta chains form an alternating ring which encloses part of the gamma chain. F(1) is attached to F(0) by a central stalk formed by the gamma and epsilon chains, while a peripheral stalk is formed by the delta and b chains.

Its subcellular location is the cell inner membrane. Its function is as follows. F(1)F(0) ATP synthase produces ATP from ADP in the presence of a proton or sodium gradient. F-type ATPases consist of two structural domains, F(1) containing the extramembraneous catalytic core and F(0) containing the membrane proton channel, linked together by a central stalk and a peripheral stalk. During catalysis, ATP synthesis in the catalytic domain of F(1) is coupled via a rotary mechanism of the central stalk subunits to proton translocation. In terms of biological role, this protein is part of the stalk that links CF(0) to CF(1). It either transmits conformational changes from CF(0) to CF(1) or is implicated in proton conduction. The protein is ATP synthase subunit delta of Aliivibrio fischeri (strain MJ11) (Vibrio fischeri).